We begin with the raw amino-acid sequence, 90 residues long: Probable Fe(2+)-trafficking protein (90 aa).

It belongs to the Fe(2+)-trafficking protein family.

In terms of biological role, could be a mediator in iron transactions between iron acquisition and iron-requiring processes, such as synthesis and/or repair of Fe-S clusters in biosynthetic enzymes. In Aliivibrio salmonicida (strain LFI1238) (Vibrio salmonicida (strain LFI1238)), this protein is Probable Fe(2+)-trafficking protein.